Reading from the N-terminus, the 218-residue chain is Putative transposase InsD for insertion element IS2E (218 aa).

The Integrase catalytic domain maps to 23-206; it reads KPAVPPSKRA…SPREYLRQRA (184 aa).

Involved in the transposition of the insertion sequence IS2. This chain is Putative transposase InsD for insertion element IS2E (insD8), found in Escherichia coli (strain K12).